Here is a 279-residue protein sequence, read N- to C-terminus: Ribosomal RNA small subunit methyltransferase A (279 aa).

S-adenosyl-L-methionine-binding residues include Asn-28, Leu-30, Gly-55, Glu-77, Asp-103, and Asn-122.

This sequence belongs to the class I-like SAM-binding methyltransferase superfamily. rRNA adenine N(6)-methyltransferase family. RsmA subfamily.

It localises to the cytoplasm. It carries out the reaction adenosine(1518)/adenosine(1519) in 16S rRNA + 4 S-adenosyl-L-methionine = N(6)-dimethyladenosine(1518)/N(6)-dimethyladenosine(1519) in 16S rRNA + 4 S-adenosyl-L-homocysteine + 4 H(+). Its function is as follows. Specifically dimethylates two adjacent adenosines (A1518 and A1519) in the loop of a conserved hairpin near the 3'-end of 16S rRNA in the 30S particle. May play a critical role in biogenesis of 30S subunits. The chain is Ribosomal RNA small subunit methyltransferase A from Ruegeria pomeroyi (strain ATCC 700808 / DSM 15171 / DSS-3) (Silicibacter pomeroyi).